Reading from the N-terminus, the 386-residue chain is Succinate--CoA ligase [ADP-forming] subunit beta (386 aa).

The ATP-grasp domain maps to 9–244 (KDLLTAYQLP…PSQENIRDVL (236 aa)). ATP contacts are provided by residues Lys46, 53–55 (GRG), Val102, and Glu107. Positions 199 and 213 each coordinate Mg(2+). Substrate contacts are provided by residues Asn264 and 321–323 (GIM).

The protein belongs to the succinate/malate CoA ligase beta subunit family. In terms of assembly, heterotetramer of two alpha and two beta subunits. Requires Mg(2+) as cofactor.

It catalyses the reaction succinate + ATP + CoA = succinyl-CoA + ADP + phosphate. The enzyme catalyses GTP + succinate + CoA = succinyl-CoA + GDP + phosphate. The protein operates within carbohydrate metabolism; tricarboxylic acid cycle; succinate from succinyl-CoA (ligase route): step 1/1. Functionally, succinyl-CoA synthetase functions in the citric acid cycle (TCA), coupling the hydrolysis of succinyl-CoA to the synthesis of either ATP or GTP and thus represents the only step of substrate-level phosphorylation in the TCA. The beta subunit provides nucleotide specificity of the enzyme and binds the substrate succinate, while the binding sites for coenzyme A and phosphate are found in the alpha subunit. This chain is Succinate--CoA ligase [ADP-forming] subunit beta, found in Chlamydia trachomatis serovar L2 (strain ATCC VR-902B / DSM 19102 / 434/Bu).